Here is a 232-residue protein sequence, read N- to C-terminus: LRRN4 C-terminal-like protein (232 aa).

The N-terminal stretch at 1-22 (MPHSPCLLWLLAVTSLVPGTQP) is a signal peptide. At 23 to 189 (LVAGDLEGDE…RLTVPPRPLT (167 aa)) the chain is on the extracellular side. The region spanning 77–172 (PPHPPRLGEV…GAEGLDSADG (96 aa)) is the Fibronectin type-III domain. N127 carries an N-linked (GlcNAc...) asparagine glycan. A helical transmembrane segment spans residues 190 to 210 (LLHAAMGVGSALALLSCSALV). The Cytoplasmic segment spans residues 211–232 (WHFCLRQRWGCPRRGRPSHAGL).

The protein resides in the membrane. The chain is LRRN4 C-terminal-like protein (LRRN4CL) from Bos taurus (Bovine).